We begin with the raw amino-acid sequence, 193 residues long: Xanthine phosphoribosyltransferase (193 aa).

Leu-20 and Thr-27 together coordinate xanthine. Residue 128–132 (ANGQA) participates in 5-phospho-alpha-D-ribose 1-diphosphate binding. Lys-156 is a binding site for xanthine.

It belongs to the purine/pyrimidine phosphoribosyltransferase family. Xpt subfamily. As to quaternary structure, homodimer.

It is found in the cytoplasm. The enzyme catalyses XMP + diphosphate = xanthine + 5-phospho-alpha-D-ribose 1-diphosphate. The protein operates within purine metabolism; XMP biosynthesis via salvage pathway; XMP from xanthine: step 1/1. Functionally, converts the preformed base xanthine, a product of nucleic acid breakdown, to xanthosine 5'-monophosphate (XMP), so it can be reused for RNA or DNA synthesis. In Streptococcus uberis (strain ATCC BAA-854 / 0140J), this protein is Xanthine phosphoribosyltransferase.